A 252-amino-acid polypeptide reads, in one-letter code: Hydroxyacylglutathione hydrolase (252 aa).

Residues His-54, His-56, Asp-58, His-59, His-111, Asp-130, and His-170 each contribute to the Zn(2+) site.

The protein belongs to the metallo-beta-lactamase superfamily. Glyoxalase II family. As to quaternary structure, monomer. Zn(2+) serves as cofactor.

It catalyses the reaction an S-(2-hydroxyacyl)glutathione + H2O = a 2-hydroxy carboxylate + glutathione + H(+). It participates in secondary metabolite metabolism; methylglyoxal degradation; (R)-lactate from methylglyoxal: step 2/2. Its function is as follows. Thiolesterase that catalyzes the hydrolysis of S-D-lactoyl-glutathione to form glutathione and D-lactic acid. The polypeptide is Hydroxyacylglutathione hydrolase (Francisella tularensis subsp. holarctica (strain FTNF002-00 / FTA)).